The following is a 1006-amino-acid chain: Cytosolic carboxypeptidase 3 (1006 aa).

The region spanning 304–576 (YPYTYSNLQE…HFCDSLLDYC (273 aa)) is the Peptidase M14 domain. Positions 368, 371, and 464 each coordinate Zn(2+). Residue Glu540 is the Proton donor/acceptor of the active site. The disordered stretch occupies residues 790 to 810 (ESHHQLKSKAKRCSSFQSKRT).

The protein belongs to the peptidase M14 family. Zn(2+) is required as a cofactor. In terms of tissue distribution, widely expressed. Expressed abundantly in tissues with m otile cilia such as testis, lung and trachea. Abundantly expressed in pituitary and kidney, moderately expressed in brain, eye, fat, pancreas, stomach, and adrenal.

Its subcellular location is the cytoplasm. The protein localises to the cytosol. It carries out the reaction (L-glutamyl)(n+1)-gamma-L-glutamyl-L-glutamyl-[protein] + H2O = (L-glutamyl)(n)-gamma-L-glutamyl-L-glutamyl-[protein] + L-glutamate. Functionally, metallocarboxypeptidase that mediates deglutamylation of tubulin and non-tubulin target proteins. Catalyzes the removal of polyglutamate side chains present on the gamma-carboxyl group of glutamate residues within the C-terminal tail of tubulin protein. Specifically cleaves tubulin long-side-chains, while it is not able to remove the branching point glutamate. Also catalyzes the removal of polyglutamate residues from the carboxy-terminus of non-tubulin proteins such as MYLK. May catalyze the hydrolysis of aspartate from the carboxy-terminus of target proteins. Does not show detyrosinase or deglycylase activities from the carboxy-terminus of target proteins. This chain is Cytosolic carboxypeptidase 3, found in Mus musculus (Mouse).